We begin with the raw amino-acid sequence, 288 residues long: Phytanoyl-CoA dioxygenase domain-containing protein 1 homolog (288 aa).

Residues K95, M134, 149 to 151, and W167 each bind 2-oxoglutarate; that span reads HVD. Fe cation contacts are provided by H149 and D151. H242 provides a ligand contact to Fe cation. 2-oxoglutarate is bound by residues S244 and R253.

It belongs to the PhyH family. PHYHD1 subfamily. Requires Fe cation as cofactor.

In terms of biological role, has alpha-ketoglutarate-dependent dioxygenase activity. Does not show detectable activity towards fatty acid CoA thioesters. Is not expected to be active with phytanoyl CoA. The chain is Phytanoyl-CoA dioxygenase domain-containing protein 1 homolog from Caenorhabditis elegans.